Consider the following 311-residue polypeptide: Aspartate carbamoyltransferase catalytic subunit (311 aa).

Carbamoyl phosphate-binding residues include Arg59 and Thr60. Lys87 provides a ligand contact to L-aspartate. 3 residues coordinate carbamoyl phosphate: Arg109, His139, and Gln142. Arg172 and Arg224 together coordinate L-aspartate. The carbamoyl phosphate site is built by Ala265 and Pro266.

This sequence belongs to the aspartate/ornithine carbamoyltransferase superfamily. ATCase family. Heterododecamer (2C3:3R2) of six catalytic PyrB chains organized as two trimers (C3), and six regulatory PyrI chains organized as three dimers (R2).

The enzyme catalyses carbamoyl phosphate + L-aspartate = N-carbamoyl-L-aspartate + phosphate + H(+). It functions in the pathway pyrimidine metabolism; UMP biosynthesis via de novo pathway; (S)-dihydroorotate from bicarbonate: step 2/3. Catalyzes the condensation of carbamoyl phosphate and aspartate to form carbamoyl aspartate and inorganic phosphate, the committed step in the de novo pyrimidine nucleotide biosynthesis pathway. The chain is Aspartate carbamoyltransferase catalytic subunit from Streptococcus equi subsp. zooepidemicus (strain MGCS10565).